The primary structure comprises 179 residues: Phospholipase A2 (179 aa).

Residues 1–21 (MHALRSSVLALWLCLHVSVRA) form the signal peptide. The propeptide occupies 22 to 39 (WMTYRSANGLDEYEPEDR). Positions 47, 49, and 51 each coordinate Ca(2+). 5 cysteine pairs are disulfide-bonded: Cys-48–Cys-70, Cys-69–Cys-109, Cys-76–Cys-102, Cys-100–Cys-133, and Cys-142–Cys-150. The active site involves His-73. Ca(2+) is bound at residue Asp-74. Asp-103 is a catalytic residue. Asn-112 carries N-linked (GlcNAc...) asparagine glycosylation.

Ca(2+) serves as cofactor. As to expression, expressed by the venom gland.

The protein localises to the secreted. The catalysed reaction is a 1,2-diacyl-sn-glycero-3-phosphocholine + H2O = a 1-acyl-sn-glycero-3-phosphocholine + a fatty acid + H(+). Functionally, PLA2 catalyzes the calcium-dependent hydrolysis of the 2-acyl groups in 3-sn-phosphoglycerides. The protein is Phospholipase A2 of Xylocopa appendiculata circumvolans (Japanese carpenter bee).